The chain runs to 764 residues: 1,4-alpha-glucan branching enzyme GlgB (764 aa).

D434 serves as the catalytic Nucleophile. The active-site Proton donor is E487.

Belongs to the glycosyl hydrolase 13 family. GlgB subfamily. In terms of assembly, monomer.

It catalyses the reaction Transfers a segment of a (1-&gt;4)-alpha-D-glucan chain to a primary hydroxy group in a similar glucan chain.. It functions in the pathway glycan biosynthesis; glycogen biosynthesis. Its function is as follows. Catalyzes the formation of the alpha-1,6-glucosidic linkages in glycogen by scission of a 1,4-alpha-linked oligosaccharide from growing alpha-1,4-glucan chains and the subsequent attachment of the oligosaccharide to the alpha-1,6 position. The protein is 1,4-alpha-glucan branching enzyme GlgB of Nostoc sp. (strain PCC 7120 / SAG 25.82 / UTEX 2576).